Reading from the N-terminus, the 485-residue chain is Adenosylhomocysteinase (485 aa).

Positions 64, 139, and 205 each coordinate substrate. 206 to 208 contacts NAD(+); it reads TTT. Substrate is bound by residues Lys-235 and Asp-239. NAD(+) contacts are provided by residues Asn-240, 269–274, Glu-292, Asn-327, 348–350, and Asn-397; these read GYGDVG and IGH.

It belongs to the adenosylhomocysteinase family. Requires NAD(+) as cofactor.

It carries out the reaction S-adenosyl-L-homocysteine + H2O = L-homocysteine + adenosine. Its pathway is amino-acid biosynthesis; L-homocysteine biosynthesis; L-homocysteine from S-adenosyl-L-homocysteine: step 1/1. Adenosylhomocysteine is a competitive inhibitor of S-adenosyl-L-methionine-dependent methyl transferase reactions; therefore adenosylhomocysteinase may play a key role in the control of methylations via regulation of the intracellular concentration of adenosylhomocysteine. This is Adenosylhomocysteinase (SAHH) from Solanum lycopersicum (Tomato).